The sequence spans 999 residues: Hypoxia up-regulated protein 1 (999 aa).

The signal sequence occupies residues 1–32 (MAATVRRQRPRRLLCWTLVAVLLADLLALSDT). Residues asparagine 155, asparagine 222, and asparagine 515 are each glycosylated (N-linked (GlcNAc...) asparagine). The tract at residues 564 to 694 (VEDSPEEEST…KKQKPARKQK (131 aa)) is disordered. Residue serine 567 is modified to Phosphoserine. The span at 574-583 (LTKLGNTISS) shows a compositional bias: polar residues. Asparagine 596 carries N-linked (GlcNAc...) asparagine glycosylation. Basic and acidic residues-rich tracts occupy residues 611-626 (GSKDEPGEQGDLKEET) and 641-670 (PKGDAAPEGEKPDEKESGGKSEAQKPEEKG). Asparagine 830, asparagine 862, and asparagine 869 each carry an N-linked (GlcNAc...) asparagine glycan. The residue at position 883 (lysine 883) is an N6-acetyllysine. A disordered region spans residues 909–999 (AKFTKPRPRP…QKRSSKNDEL (91 aa)). N-linked (GlcNAc...) asparagine glycosylation is found at asparagine 922 and asparagine 931. A compositionally biased stretch (basic and acidic residues) spans 949–962 (EEAKPILEPDKEET). Positions 996 to 999 (NDEL) match the Prevents secretion from ER motif.

It belongs to the heat shock protein 70 family. Part of a large chaperone multiprotein complex comprising DNAJB11, HSP90B1, HSPA5, HYOU, PDIA2, PDIA4, PDIA6, PPIB, SDF2L1, UGGT1 and very small amounts of ERP29, but not, or at very low levels, CALR nor CANX.

The protein localises to the endoplasmic reticulum lumen. Functionally, has a pivotal role in cytoprotective cellular mechanisms triggered by oxygen deprivation. Promotes HSPA5/BiP-mediated ATP nucleotide exchange and thereby activates the unfolded protein response (UPR) pathway in the presence of endoplasmic reticulum stress. May play a role as a molecular chaperone and participate in protein folding. This chain is Hypoxia up-regulated protein 1 (HYOU1), found in Cricetulus griseus (Chinese hamster).